The following is a 121-amino-acid chain: Large ribosomal subunit protein bL12 (121 aa).

It belongs to the bacterial ribosomal protein bL12 family. In terms of assembly, homodimer. Part of the ribosomal stalk of the 50S ribosomal subunit. Forms a multimeric L10(L12)X complex, where L10 forms an elongated spine to which 2 to 4 L12 dimers bind in a sequential fashion. Binds GTP-bound translation factors.

Forms part of the ribosomal stalk which helps the ribosome interact with GTP-bound translation factors. Is thus essential for accurate translation. In Clostridium novyi (strain NT), this protein is Large ribosomal subunit protein bL12.